Consider the following 378-residue polypeptide: SWI/SNF-related matrix-associated actin-dependent regulator of chromatin subfamily B member 1 (378 aa).

A DNA-binding region spans residues 1-106 (MIMALSKTFG…DEKYKAVSIS (106 aa)).

Belongs to the SNF5 family. In terms of assembly, component of the multiprotein chromatin-remodeling complexes SWI/SNF. Component of neural progenitors-specific chromatin remodeling complex (npBAF complex) and the neuron-specific chromatin remodeling complex (nBAF complex). Component of the BAF (SWI/SNF) chromatin remodeling complex. Component of the SWI/SNF-B (PBAF) chromatin remodeling complex. Binds to double-stranded DNA.

Its subcellular location is the nucleus. In terms of biological role, involved in chromatin-remodeling. Core component of the BAF (SWI/SNF) complex. This ATP-dependent chromatin-remodeling complex plays important roles in cell proliferation and differentiation, in cellular antiviral activities and inhibition of tumor formation. Belongs to the neural progenitors-specific chromatin remodeling complex (npBAF complex) and the neuron-specific chromatin remodeling complex (nBAF complex) and may play a role in neural development. The chain is SWI/SNF-related matrix-associated actin-dependent regulator of chromatin subfamily B member 1 (smarcb1) from Xenopus tropicalis (Western clawed frog).